We begin with the raw amino-acid sequence, 658 residues long: Transport protein particle subunit trs85-1 (658 aa).

The protein belongs to the TRS85 family. As to quaternary structure, part of the multisubunit TRAPP (transport protein particle) complexes I and II.

The protein resides in the golgi apparatus. Its subcellular location is the cis-Golgi network. In terms of biological role, component of the TRAPP I and TRAPP II complexes. TRAPP I plays a key role in the late stages of endoplasmic reticulum to Golgi traffic. TRAPP II seems to play a role in intra-Golgi transport. Has a role late in meiosis following DNA replication. This is Transport protein particle subunit trs85-1 (trs85-1) from Schizosaccharomyces pombe (strain 972 / ATCC 24843) (Fission yeast).